Here is a 245-residue protein sequence, read N- to C-terminus: 1-(5-phosphoribosyl)-5-[(5-phosphoribosylamino)methylideneamino] imidazole-4-carboxamide isomerase (245 aa).

Asp7 functions as the Proton acceptor in the catalytic mechanism. The active-site Proton donor is Asp129.

The protein belongs to the HisA/HisF family.

The protein localises to the cytoplasm. The catalysed reaction is 1-(5-phospho-beta-D-ribosyl)-5-[(5-phospho-beta-D-ribosylamino)methylideneamino]imidazole-4-carboxamide = 5-[(5-phospho-1-deoxy-D-ribulos-1-ylimino)methylamino]-1-(5-phospho-beta-D-ribosyl)imidazole-4-carboxamide. The protein operates within amino-acid biosynthesis; L-histidine biosynthesis; L-histidine from 5-phospho-alpha-D-ribose 1-diphosphate: step 4/9. In Salmonella choleraesuis (strain SC-B67), this protein is 1-(5-phosphoribosyl)-5-[(5-phosphoribosylamino)methylideneamino] imidazole-4-carboxamide isomerase.